We begin with the raw amino-acid sequence, 36 residues long: Dolichyl-diphosphooligosaccharide--protein glycosyltransferase subunit 2 (36 aa).

It belongs to the SWP1 family. Component of the oligosaccharyltransferase (OST) complex.

The protein localises to the endoplasmic reticulum. It localises to the endoplasmic reticulum membrane. It functions in the pathway protein modification; protein glycosylation. Its function is as follows. Subunit of the oligosaccharyl transferase (OST) complex that catalyzes the initial transfer of a defined glycan (Glc(3)Man(9)GlcNAc(2) in eukaryotes) from the lipid carrier dolichol-pyrophosphate to an asparagine residue within an Asn-X-Ser/Thr consensus motif in nascent polypeptide chains, the first step in protein N-glycosylation. N-glycosylation occurs cotranslationally and the complex associates with the Sec61 complex at the channel-forming translocon complex that mediates protein translocation across the endoplasmic reticulum (ER). All subunits are required for a maximal enzyme activity. The protein is Dolichyl-diphosphooligosaccharide--protein glycosyltransferase subunit 2 of Gallus gallus (Chicken).